Reading from the N-terminus, the 155-residue chain is S-ribosylhomocysteine lyase (155 aa).

Fe cation contacts are provided by histidine 57, histidine 61, and cysteine 124.

This sequence belongs to the LuxS family. As to quaternary structure, homodimer. It depends on Fe cation as a cofactor.

It carries out the reaction S-(5-deoxy-D-ribos-5-yl)-L-homocysteine = (S)-4,5-dihydroxypentane-2,3-dione + L-homocysteine. Functionally, involved in the synthesis of autoinducer 2 (AI-2) which is secreted by bacteria and is used to communicate both the cell density and the metabolic potential of the environment. The regulation of gene expression in response to changes in cell density is called quorum sensing. Catalyzes the transformation of S-ribosylhomocysteine (RHC) to homocysteine (HC) and 4,5-dihydroxy-2,3-pentadione (DPD). The chain is S-ribosylhomocysteine lyase from Listeria monocytogenes serovar 1/2a (strain ATCC BAA-679 / EGD-e).